Consider the following 279-residue polypeptide: Tryptophan synthase alpha chain (279 aa).

Active-site proton acceptor residues include E50 and D61.

Belongs to the TrpA family. As to quaternary structure, tetramer of two alpha and two beta chains.

The enzyme catalyses (1S,2R)-1-C-(indol-3-yl)glycerol 3-phosphate + L-serine = D-glyceraldehyde 3-phosphate + L-tryptophan + H2O. It participates in amino-acid biosynthesis; L-tryptophan biosynthesis; L-tryptophan from chorismate: step 5/5. In terms of biological role, the alpha subunit is responsible for the aldol cleavage of indoleglycerol phosphate to indole and glyceraldehyde 3-phosphate. The chain is Tryptophan synthase alpha chain from Sinorhizobium fredii (strain NBRC 101917 / NGR234).